The chain runs to 148 residues: Small ribosomal subunit protein uS13 (148 aa).

Positions 128-148 (RGQRTKSTGRRGSTIGVRKKK) are disordered.

Belongs to the universal ribosomal protein uS13 family. As to quaternary structure, part of the 30S ribosomal subunit. Forms a loose heterodimer with protein S19. Forms two bridges to the 50S subunit in the 70S ribosome.

Functionally, located at the top of the head of the 30S subunit, it contacts several helices of the 16S rRNA. In the 70S ribosome it contacts the 23S rRNA (bridge B1a) and protein L5 of the 50S subunit (bridge B1b), connecting the 2 subunits; these bridges are implicated in subunit movement. This chain is Small ribosomal subunit protein uS13, found in Methanococcoides burtonii (strain DSM 6242 / NBRC 107633 / OCM 468 / ACE-M).